The following is a 1033-amino-acid chain: Calcium-transporting ATPase 12, plasma membrane-type (1033 aa).

The residue at position 1 (Met1) is an N-acetylmethionine. Residues 1 to 152 are Cytoplasmic-facing; sequence MRDLKEYDYS…NTYHKPPPKG (152 aa). The tract at residues 25–36 is interaction with calmodulin; the sequence is QRRWRFAYAAIY. Ser37 is subject to Phosphoserine. A helical transmembrane segment spans residues 153-173; that stretch reads LLFFVYEAFKDLTILILLVCA. Residues 174–191 are Lumenal-facing; the sequence is IFSLGFGIKEHGIKEGWY. The helical transmembrane segment at 192 to 212 threads the bilayer; sequence EGGSIFVAVFLVIVVSALSNF. Over 213–341 the chain is Cytoplasmic; sequence RQERQFDKLS…SERTPLQVRL (129 aa). The helical transmembrane segment at 342–361 threads the bilayer; that stretch reads DTLTSTIGKIGLTVAALVLV. At 362–397 the chain is on the lumenal side; the sequence is VLLVRYFTGNTEKEGKREYNGSKTPVDTVVNSVVRI. The helical transmembrane segment at 398-415 threads the bilayer; the sequence is VAAAVTIVVVAIPEGLPL. Over 416–806 the chain is Cytoplasmic; that stretch reads AVTLTLAYSM…KWGRCVYNNI (391 aa). The active-site 4-aspartylphosphate intermediate is the Asp453. The Mg(2+) site is built by Asp751 and Asp755. A helical transmembrane segment spans residues 807 to 825; that stretch reads QKFIQFQLTVNVAALVINF. Residues 826-836 are Lumenal-facing; the sequence is IAAISAGEVPL. A helical membrane pass occupies residues 837–857; sequence TAVQLLWVNLIMDTLGALALA. The Cytoplasmic segment spans residues 858–877; the sequence is TERPTNELLKRKPVGRTEAL. The helical transmembrane segment at 878 to 900 threads the bilayer; it reads ITNVMWRNLLVQSLYQIAVLLIL. At 901-909 the chain is on the lumenal side; that stretch reads QFKGMSIFS. Residues 910-930 form a helical membrane-spanning segment; sequence VRKEVKDTLIFNTFVLCQVFN. Residues 931-948 lie on the Cytoplasmic side of the membrane; it reads EFNAREMEKKNVFKGLHR. A helical transmembrane segment spans residues 949-970; the sequence is NRLFIGIIAITIVLQVIMVEFL. Residues 971-980 lie on the Lumenal side of the membrane; that stretch reads KKFADTVRLN. A helical transmembrane segment spans residues 981 to 1002; that stretch reads GWQWGTCIALASLSWPIGFFTK. The Cytoplasmic segment spans residues 1003 to 1006; sequence FIPV.

The protein belongs to the cation transport ATPase (P-type) (TC 3.A.3) family. Type IIB subfamily.

It localises to the membrane. The enzyme catalyses Ca(2+)(in) + ATP + H2O = Ca(2+)(out) + ADP + phosphate + H(+). Activated by calmodulin. This magnesium-dependent enzyme catalyzes the hydrolysis of ATP coupled with the translocation of calcium from the cytosol out of the cell or into organelles. The sequence is that of Calcium-transporting ATPase 12, plasma membrane-type (ACA12) from Arabidopsis thaliana (Mouse-ear cress).